Consider the following 100-residue polypeptide: Large ribosomal subunit protein uL23 (100 aa).

This sequence belongs to the universal ribosomal protein uL23 family. In terms of assembly, part of the 50S ribosomal subunit. Contacts protein L29, and trigger factor when it is bound to the ribosome.

Functionally, one of the early assembly proteins it binds 23S rRNA. One of the proteins that surrounds the polypeptide exit tunnel on the outside of the ribosome. Forms the main docking site for trigger factor binding to the ribosome. In Vibrio atlanticus (strain LGP32) (Vibrio splendidus (strain Mel32)), this protein is Large ribosomal subunit protein uL23.